Reading from the N-terminus, the 350-residue chain is Ion-translocating oxidoreductase complex subunit D (350 aa).

The next 3 helical transmembrane spans lie at 36–56 (CYFFGWGTLIQIALAIAIAVA), 89–109 (IPALAPWWIAAIGVIFAILVV), and 124–144 (AMAAYVMLLISFPMQMTTWVA). Position 185 is an FMN phosphoryl threonine (Thr-185). A run of 5 helical transmembrane segments spans residues 212 to 232 (GFGIGWALINLAYLAGGLVML), 239 to 259 (WQISTAILASLFVCASIGYLL), 265 to 285 (MGPLLHLFSGATMLAAFFIAT), 298 to 318 (LIFGSLIGLLVYLIRSFCGYP), and 319 to 339 (DAFAFAVLLANLCAPFIDYYV).

This sequence belongs to the NqrB/RnfD family. In terms of assembly, the complex is composed of six subunits: RnfA, RnfB, RnfC, RnfD, RnfE and RnfG. FMN is required as a cofactor.

It localises to the cell inner membrane. Functionally, part of a membrane-bound complex that couples electron transfer with translocation of ions across the membrane. The chain is Ion-translocating oxidoreductase complex subunit D from Shewanella loihica (strain ATCC BAA-1088 / PV-4).